Consider the following 178-residue polypeptide: Pyruvate synthase subunit PorC (178 aa).

Heterotetramer of one alpha, one beta, one delta and one gamma chain.

It carries out the reaction 2 oxidized [2Fe-2S]-[ferredoxin] + pyruvate + CoA = 2 reduced [2Fe-2S]-[ferredoxin] + acetyl-CoA + CO2 + H(+). In Methanocaldococcus jannaschii (strain ATCC 43067 / DSM 2661 / JAL-1 / JCM 10045 / NBRC 100440) (Methanococcus jannaschii), this protein is Pyruvate synthase subunit PorC (porC).